We begin with the raw amino-acid sequence, 933 residues long: MPRHHAGGEEGGAAGLWVRSGAAAAAGAGGGRPGSGMKDVESGRGRVLLNSAAARGDGLLLLGTRAAALGGGGGGLRESRRGKQGARMSLLGKPLSYTSSQSCRRNVKYRRVQNYLYNVLERPRGWAFVYHAFVFLLVFGCLILSVFSTIPEHTKLASSCLLILEFVMIVVFGLEFIIRIWSAGCCCRYRGWQGRLRFARKPFCVIDTIVLIASIAVVSAKTQGNIFATSALRSLRFLQILRMVRMDRRGGTWKLLGSVVYAHSKELITAWYIGFLVLIFSSFLVYLVEKDANKEFSTYADALWWGTITLTTIGYGDKTPLTWLGRLLSAGFALLGISFFALPAGILGSGFALKVQEQHRQKHFEKRRNPAANLIQCVWRSYAADEKSVSIATWKPHLKALHTCSPTKKEQGEASSSQKLSFKERVRMASPRGQSIKSRQASVGDRRSPSTDITAEGSPTKVQKSWSFNDRTRFRPSLRLKSSQPKPVIDADTALGIDDVYDEKGCQCDVSVEDLTPPLKTVIRAIRIMKFHVAKRKFKETLRPYDVKDVIEQYSAGHLDMLCRIKSLQTRVDQILGKGQMTSDKKSREKITAEHETTDDPSMLARVVKVEKQVQSIESKLDCLLDIYQQVLRKGSASALTLASFQIPPFECEQTSDYQSPVDSKDLSGSAQNSGCLTRSASANISRGLQFILTPNEFSAQTFYALSPTMHSQATQVPMSQNDGSSVVATNNIANQISAAPKPAAPTTLQIPPPLSAIKHLSRPEPLLSNPTGLQESISDVTTCLVASKESVQFAQSNLTKDRSLRKSFDMGGETLLSVRPMVPKDLGKSLSVQNLIRSTEELNLQFSGSESSGSRGSQDFYPKWRESKLFITDEEVGAEETETDTFDGTPPPAGEAAFSSDSLRTGRSRSSQNICKTGDSTDALSLPHVKLN.

The Cytoplasmic segment spans residues 1 to 126; sequence MPRHHAGGEE…YNVLERPRGW (126 aa). At Ser-89 the chain carries Phosphoserine. A helical transmembrane segment spans residues 127-147; it reads AFVYHAFVFLLVFGCLILSVF. At 148–157 the chain is on the extracellular side; that stretch reads STIPEHTKLA. A helical membrane pass occupies residues 158 to 178; sequence SSCLLILEFVMIVVFGLEFII. Topologically, residues 179-201 are cytoplasmic; sequence RIWSAGCCCRYRGWQGRLRFARK. Residues 202–222 traverse the membrane as a helical segment; that stretch reads PFCVIDTIVLIASIAVVSAKT. At 223-230 the chain is on the extracellular side; it reads QGNIFATS. The chain crosses the membrane as a helical; Voltage-sensor span at residues 231–253; the sequence is ALRSLRFLQILRMVRMDRRGGTW. The a 1,2-diacyl-sn-glycero-3-phospho-(1D-myo-inositol-4,5-bisphosphate) site is built by Arg-249 and Lys-265. The Cytoplasmic portion of the chain corresponds to 254–267; sequence KLLGSVVYAHSKEL. The chain crosses the membrane as a helical span at residues 268–288; sequence ITAWYIGFLVLIFSSFLVYLV. Topologically, residues 289–299 are extracellular; it reads EKDANKEFSTY. Residues 300–320 constitute an intramembrane region (pore-forming); the sequence is ADALWWGTITLTTIGYGDKTP. Over 321 to 326 the chain is Extracellular; sequence LTWLGR. A helical membrane pass occupies residues 327 to 347; the sequence is LLSAGFALLGISFFALPAGIL. The Cytoplasmic segment spans residues 348–933; that stretch reads GSGFALKVQE…ALSLPHVKLN (586 aa). Lys-362 is an a 1,2-diacyl-sn-glycero-3-phospho-(1D-myo-inositol-4,5-bisphosphate) binding site. An interaction with CALM region spans residues 371–379; the sequence is AANLIQCVW. The tract at residues 405 to 465 is disordered; sequence SPTKKEQGEA…EGSPTKVQKS (61 aa). The segment covering 432-441 has biased composition (polar residues); sequence RGQSIKSRQA. Residue Ser-448 is modified to Phosphoserine. The segment at 522-529 is interaction with CALM; it reads VIRAIRIM. The interval 578 to 598 is disordered; the sequence is KGQMTSDKKSREKITAEHETT. Residues 583–598 are compositionally biased toward basic and acidic residues; it reads SDKKSREKITAEHETT. Residue Ser-832 is modified to Phosphoserine. A disordered region spans residues 878–933; the sequence is GAEETETDTFDGTPPPAGEAAFSSDSLRTGRSRSSQNICKTGDSTDALSLPHVKLN. Positions 900–924 are enriched in polar residues; it reads SSDSLRTGRSRSSQNICKTGDSTDA.

It belongs to the potassium channel family. KQT (TC 1.A.1.15) subfamily. Kv7.5/KCNQ5 sub-subfamily. As to quaternary structure, homotetramer; forms a functional homotetrameric channel resulting in the expression of a small M-current. Heterotetramer with KCNQ3; forms heterotetrameric M-channel responsible for the native M-current. Heterotetramer with KCNQ1; forms a functional voltage-gated potassium channel. Interacts (via C-terminus) with calmodulin/CALM; forms a heterooctameric structure (with 4:4 KCNQ1:CALM stoichiometry); the interaction is calcium-independent, constitutive and participates in the channel function. Strongly expressed in brain. Also expressed in colon, lung and uterus.

It is found in the cell membrane. It carries out the reaction K(+)(in) = K(+)(out). With respect to regulation, phosphatidylinositol-4,5-bisphosphate (PIP2) is essential to activate KCNQ5 channel by inducing the coupling of the voltage-sensing domain (VSD) and the pore-forming domain (PD). Calcium suppresses KCNQ5 channel current through calcium-bound CALM C-terminus. Therefore CALM acts as calcium sensor that controls channel activity. Zinc potentiates channel activity in a pH-dependent manner. The activity is modulated by small changes in cell volume. Activated by the anticonvulsant retigabine. Inhibited by linopirdine and XE991. Functionally, pore-forming subunit of the voltage-gated potassium (Kv) channel broadly expressed in brain and skeletal muscle and involved in the regulation of neuronal excitability. Associates with KCNQ3/Kv7.3 pore-forming subunit to form a potassium channel which contributes to M-type current, a slowly activating and deactivating potassium conductance which plays a critical role in determining the subthreshold electrical excitability of neurons. Contributes, with other potassium channels, to the molecular diversity of a heterogeneous population of M-channels, varying in kinetic and pharmacological properties, which underlie this physiologically important current. Also forms a functional channel with KCNQ1/Kv7.1 subunit that may contribute to vasoconstriction and hypertension. Channel may be selectively permeable in vitro to other cations besides potassium, in decreasing order of affinity K(+) = Rb(+) &gt; Cs(+) &gt; Na(+). This chain is Potassium voltage-gated channel subfamily KQT member 5, found in Mus musculus (Mouse).